The sequence spans 211 residues: Inactive ribonuclease-like protein 10 (211 aa).

A signal peptide spans 1–24; it reads MKLTLVQIFFMMLLLLLGLGVGLG.

Belongs to the pancreatic ribonuclease family. In terms of processing, the N-terminus is blocked. Glycosylated.

It is found in the secreted. Secreted proximal epididymal protein required for post-testicular sperm maturation and male fertility. May be involved in sperm adhesion to the egg zona pellucida. Does not have ribonuclease activity. This is Inactive ribonuclease-like protein 10 (RNASE10) from Bos taurus (Bovine).